Consider the following 208-residue polypeptide: Large ribosomal subunit protein uL4 (208 aa).

A disordered region spans residues 47–84 (ARAARERSDVARTGKKFGRQKGGGTARHGDRRAPVFIG). The span at 49–58 (AARERSDVAR) shows a compositional bias: basic and acidic residues.

This sequence belongs to the universal ribosomal protein uL4 family. Part of the 50S ribosomal subunit.

One of the primary rRNA binding proteins, this protein initially binds near the 5'-end of the 23S rRNA. It is important during the early stages of 50S assembly. It makes multiple contacts with different domains of the 23S rRNA in the assembled 50S subunit and ribosome. Functionally, forms part of the polypeptide exit tunnel. The protein is Large ribosomal subunit protein uL4 of Rhizorhabdus wittichii (strain DSM 6014 / CCUG 31198 / JCM 15750 / NBRC 105917 / EY 4224 / RW1) (Sphingomonas wittichii).